Here is a 555-residue protein sequence, read N- to C-terminus: Potassium-transporting ATPase potassium-binding subunit (555 aa).

The next 10 helical transmembrane spans lie at 2-22, 60-80, 130-150, 173-193, 246-266, 278-298, 374-394, 412-432, 483-503, and 525-545; these read IWVA…PTGI, QYAL…YFIF, IGIT…VMAF, VFLP…VPQT, MSNI…PFTY, ILFV…TTSE, AGFV…GLMV, LIAV…ALAL, LVMF…AASL, and GIFI…MLVL.

The protein belongs to the KdpA family. As to quaternary structure, the system is composed of three essential subunits: KdpA, KdpB and KdpC.

Its subcellular location is the cell membrane. Functionally, part of the high-affinity ATP-driven potassium transport (or Kdp) system, which catalyzes the hydrolysis of ATP coupled with the electrogenic transport of potassium into the cytoplasm. This subunit binds the extracellular potassium ions and delivers the ions to the membrane domain of KdpB through an intramembrane tunnel. This chain is Potassium-transporting ATPase potassium-binding subunit, found in Bacillus cereus (strain 03BB102).